The sequence spans 125 residues: Urotensin-2 (125 aa).

An N-terminal signal peptide occupies residues 1-20; sequence MYKLASCCLLFIGFLNPLFS. Residues 21 to 111 constitute a propeptide that is removed on maturation; sequence LPLLDSGEVS…HLLARIRKPY (91 aa). A disulfide bridge connects residues cysteine 119 and cysteine 124.

This sequence belongs to the urotensin-2 family.

The protein localises to the secreted. Its function is as follows. Highly potent vasoconstrictor. The protein is Urotensin-2 (UTS2) of Macaca mulatta (Rhesus macaque).